Consider the following 373-residue polypeptide: Cytoplasmic tRNA 2-thiolation protein 1 (373 aa).

The protein belongs to the TtcA family. CTU1/NCS6/ATPBD3 subfamily.

Its subcellular location is the cytoplasm. Its pathway is tRNA modification; 5-methoxycarbonylmethyl-2-thiouridine-tRNA biosynthesis. In terms of biological role, plays a central role in 2-thiolation of mcm(5)S(2)U at tRNA wobble positions of tRNA(Lys), tRNA(Glu) and tRNA(Gln). Directly binds tRNAs and probably acts by catalyzing adenylation of tRNAs, an intermediate required for 2-thiolation. It is unclear whether it acts as a sulfurtransferase that transfers sulfur from thiocarboxylated URM1 onto the uridine of tRNAs at wobble position. Prior mcm(5) tRNA modification by the elongator complex is required for 2-thiolation. May also be involved in protein urmylation. The sequence is that of Cytoplasmic tRNA 2-thiolation protein 1 from Malassezia globosa (strain ATCC MYA-4612 / CBS 7966) (Dandruff-associated fungus).